The chain runs to 323 residues: Viral cathepsin (323 aa).

Positions 1–16 (MNKILFYLFVYAVVKS) are cleaved as a signal peptide. A propeptide spans 17–112 (AAYDPLKAPN…ILLDQPPGKG (96 aa)) (activation peptide). 3 disulfides stabilise this stretch: C133–C174, C167–C207, and C262–C310. Residue C136 is part of the active site. A glycan (N-linked (GlcNAc...) asparagine; by host) is linked at N158. Active-site residues include H269 and N289.

The protein belongs to the peptidase C1 family. Synthesized as an inactive proenzyme and activated by proteolytic removal of the inhibitory propeptide.

The enzyme catalyses Endopeptidase of broad specificity, hydrolyzing substrates of both cathepsin L and cathepsin B.. In terms of biological role, cysteine protease that plays an essential role in host liquefaction to facilitate horizontal transmission of the virus. May participate in the degradation of foreign protein expressed by the baculovirus system. This chain is Viral cathepsin (VCATH), found in Bombyx mori (Silk moth).